The primary structure comprises 100 residues: Small ribosomal subunit protein uS14c (100 aa).

Residues 1–31 are disordered; sequence MARKSLIQREKKRQKLEQKYHSIRRSSKKEI.

This sequence belongs to the universal ribosomal protein uS14 family. In terms of assembly, part of the 30S ribosomal subunit.

The protein localises to the plastid. It is found in the chloroplast. Binds 16S rRNA, required for the assembly of 30S particles. This is Small ribosomal subunit protein uS14c from Nicotiana tomentosiformis (Tobacco).